The following is a 427-amino-acid chain: Membrane-bound hydrogenase subunit alpha (427 aa).

Ni(2+) contacts are provided by cysteine 68, cysteine 71, cysteine 374, and cysteine 377.

The protein belongs to the complex I 49 kDa subunit family. The membrane-bound hydrogenase complex is composed of MbhK and MbhL, and may also contain MbhJ. Ni(2+) is required as a cofactor.

Its subcellular location is the cell membrane. The catalysed reaction is H2 + 2 oxidized [2Fe-2S]-[ferredoxin] = 2 reduced [2Fe-2S]-[ferredoxin] + 2 H(+). With respect to regulation, inhibited by 0.1 mM Cu(2+). In terms of biological role, alpha subunit of a hydrogen-evolving hydrogenase that utilizes protons both as a substrate for hydrogen production and proton translocation. Acts by coupling the redox reaction via ferredoxin and iron-sulfur (Fe-S) clusters to proton translocation across the membrane thereby conserving the redox energy in a proton gradient. This is Membrane-bound hydrogenase subunit alpha from Pyrococcus furiosus (strain ATCC 43587 / DSM 3638 / JCM 8422 / Vc1).